Here is a 427-residue protein sequence, read N- to C-terminus: UBX domain-containing protein 10 (427 aa).

Residues 247-311 are a coiled coil; the sequence is LERFRSEREA…VQKKKKQYRA (65 aa). The UBX domain maps to 323-425; it reads SEDEPARLSI…FPNGTVVVEL (103 aa).

It localises to the endoplasmic reticulum. Its function is as follows. Involved in protein degradation through the ubiquitin/proteasome pathway. The chain is UBX domain-containing protein 10 (ucp10) from Schizosaccharomyces pombe (strain 972 / ATCC 24843) (Fission yeast).